The chain runs to 330 residues: Aspartate--ammonia ligase (330 aa).

Belongs to the class-II aminoacyl-tRNA synthetase family. AsnA subfamily.

Its subcellular location is the cytoplasm. The catalysed reaction is L-aspartate + NH4(+) + ATP = L-asparagine + AMP + diphosphate + H(+). Its pathway is amino-acid biosynthesis; L-asparagine biosynthesis; L-asparagine from L-aspartate (ammonia route): step 1/1. The polypeptide is Aspartate--ammonia ligase (Enterobacter sp. (strain 638)).